Here is a 151-residue protein sequence, read N- to C-terminus: UPF0756 membrane protein Hore_21770 (151 aa).

Helical transmembrane passes span 7-29 (LLII…GLLL), 49-69 (IEIG…LSPV), 84-104 (TVAI…LDLL), 110-130 (FILG…GIPV), and 131-151 (GPLM…IIKG).

The protein belongs to the UPF0756 family.

The protein resides in the cell membrane. The polypeptide is UPF0756 membrane protein Hore_21770 (Halothermothrix orenii (strain H 168 / OCM 544 / DSM 9562)).